Reading from the N-terminus, the 618-residue chain is ELMO domain-containing protein C (618 aa).

A coiled-coil region spans residues 1–72; it reads MERYRIRRER…EELRLQGDRF (72 aa). Disordered regions lie at residues 153–175 and 245–276; these read NFDN…KPSL and TTTT…STTV. Composition is skewed to low complexity over residues 156–171 and 245–275; these read NNNN…NNGN and TTTT…SSTT. Residues 382–545 form the ELMO domain; it reads DHEEYLKHLW…KLKSQLNEIS (164 aa). 2 stretches are compositionally biased toward low complexity: residues 574 to 592 and 602 to 618; these read QQQQ…PSSP and TTTS…TQNN. The disordered stretch occupies residues 574 to 618; the sequence is QQQQQLQQQQQSLPLPSSPRSFLNNYQQTTTSSTSISPSKNTQNN.

The chain is ELMO domain-containing protein C (elmoC) from Dictyostelium discoideum (Social amoeba).